Consider the following 861-residue polypeptide: Alpha-actinin A (861 aa).

The interval methionine 1–histidine 239 is actin-binding. Calponin-homology (CH) domains follow at residues isoleucine 22–alanine 127 and leucine 136–serine 242. 4 Spectrin repeats span residues histidine 240 to lysine 365, alanine 366 to lysine 480, serine 481 to lysine 601, and valine 602 to valine 714. 2 consecutive EF-hand domains span residues glutamate 729 to glutamate 764 and leucine 765 to glycine 800. Residues aspartate 742, aspartate 744, aspartate 746, lysine 748, glutamate 753, aspartate 778, aspartate 780, asparagine 782, threonine 784, and glutamate 789 each contribute to the Ca(2+) site.

It belongs to the alpha-actinin family. Homodimer; antiparallel.

It is found in the cytoplasm. Its subcellular location is the cell cortex. The protein localises to the contractile vacuole. The protein resides in the cytoplasmic vesicle. It localises to the phagosome. Functionally, F-actin cross-linking protein which is thought to anchor actin to a variety of intracellular structures. This is a bundling protein. Increases the actin-stimulated ATPase activity of myosin. Involved in vegetative cell growth, phagocytosis, motility and development, probably through stabilization of the actin network in the cortical cytoskeleton. This chain is Alpha-actinin A (abpA), found in Dictyostelium discoideum (Social amoeba).